The sequence spans 359 residues: Aminomethyltransferase (359 aa).

Belongs to the GcvT family. As to quaternary structure, the glycine cleavage system is composed of four proteins: P, T, L and H.

The enzyme catalyses N(6)-[(R)-S(8)-aminomethyldihydrolipoyl]-L-lysyl-[protein] + (6S)-5,6,7,8-tetrahydrofolate = N(6)-[(R)-dihydrolipoyl]-L-lysyl-[protein] + (6R)-5,10-methylene-5,6,7,8-tetrahydrofolate + NH4(+). The glycine cleavage system catalyzes the degradation of glycine. The polypeptide is Aminomethyltransferase (Idiomarina loihiensis (strain ATCC BAA-735 / DSM 15497 / L2-TR)).